Consider the following 577-residue polypeptide: Arginine--tRNA ligase (577 aa).

The 'HIGH' region motif lies at 122 to 132 (PNVAKEMHVGH).

Belongs to the class-I aminoacyl-tRNA synthetase family. As to quaternary structure, monomer.

The protein localises to the cytoplasm. The catalysed reaction is tRNA(Arg) + L-arginine + ATP = L-arginyl-tRNA(Arg) + AMP + diphosphate. This is Arginine--tRNA ligase from Shigella flexneri.